Reading from the N-terminus, the 271-residue chain is Short-chain type dehydrogenase/reductase (271 aa).

Residue 25-49 coordinates NAD(+); that stretch reads IVTGASRGIGREIALNMAEKGAKVV. S166 provides a ligand contact to substrate. Y179 serves as the catalytic Proton acceptor.

Belongs to the short-chain dehydrogenases/reductases (SDR) family.

This Picea abies (Norway spruce) protein is Short-chain type dehydrogenase/reductase.